The following is a 427-amino-acid chain: MSNNQILFERAQKTIPGGVNSPVRAFRSVGGTPRFVARAQGPYFWDADGKQYIDYIGSWGPMIVGHVHPEVLAAVQRVLADGFSFGAPTEAEIEIAEEICKLVPSIEQVRMVSSGTEATMSALRLARGFTGRSRIVKFEGCYHGHADSLLVKAGSGLLTFGNPTSAGVPADIAKHTTVLEYNNVAALEEAFGAFGDEIAAVIVEPVAGNMNLVRGTPEFLNALRALCTKHGAVLIFDEVMCGFRVALGGAQQHYGIAADLTCLGKVIGGGMPAAAFGGRRDIMAHLAPLGGVYQAGTLSGNPIAVAAGLKTLQLIQAPGFYDALTAQTKRLADGLAAEARAAGVPFAADSIGAMFGLYFAERVPASFAEVTKSDVERFNRFFHLMLDEGVYFAPSAYEAGFVSSTHDDAVIDATLAAARRAFAALAA.

Position 265 is an N6-(pyridoxal phosphate)lysine (Lys-265).

This sequence belongs to the class-III pyridoxal-phosphate-dependent aminotransferase family. HemL subfamily. In terms of assembly, homodimer. Requires pyridoxal 5'-phosphate as cofactor.

The protein localises to the cytoplasm. It catalyses the reaction (S)-4-amino-5-oxopentanoate = 5-aminolevulinate. Its pathway is porphyrin-containing compound metabolism; protoporphyrin-IX biosynthesis; 5-aminolevulinate from L-glutamyl-tRNA(Glu): step 2/2. This chain is Glutamate-1-semialdehyde 2,1-aminomutase, found in Burkholderia vietnamiensis (strain G4 / LMG 22486) (Burkholderia cepacia (strain R1808)).